The chain runs to 309 residues: Uricase-2 isozyme 1 (309 aa).

Catalysis depends on charge relay system residues K18 and T64. Positions 64, 65, 166, 183, 238, 239, and 265 each coordinate urate. The Charge relay system role is filled by H267. Positions 307-309 (SKL) match the Microbody targeting signal motif.

This sequence belongs to the uricase family. In terms of assembly, homotetramer. The N-terminus is blocked. As to expression, expressed predominantly in the uninfected cells of the central tissue of the root nodule.

It is found in the peroxisome. The enzyme catalyses urate + O2 + H2O = 5-hydroxyisourate + H2O2. It functions in the pathway purine metabolism; urate degradation; (S)-allantoin from urate: step 1/3. Its function is as follows. Catalyzes the oxidation of uric acid to 5-hydroxyisourate, which is further processed to form (S)-allantoin. In Glycine max (Soybean), this protein is Uricase-2 isozyme 1.